Here is a 183-residue protein sequence, read N- to C-terminus: Efficient mitochondria targeting-associated protein 19 (183 aa).

Topologically, residues 1–25 (MKVVSLRRIYSSEIYKLPTTRLHMD) are cytoplasmic. The region spanning 24–156 (MDTLYYYYFV…PYLAIPLWMA (133 aa)) is the EXPERA domain. A helical membrane pass occupies residues 26–46 (TLYYYYFVSHLAAALFVDLPI). The Lumenal segment spans residues 47 to 81 (TEWLGGSLSCLSGLRRFYLSTYEDPILLIPAPWKT). Residues 82-102 (ALFSSELFFQVPFFIWVSLRL) traverse the membrane as a helical segment. At 103–110 (RKKARDPV) the chain is on the cytoplasmic side. Residues 111 to 131 (LWVAILIYGVHAFTTTWCCMF) traverse the membrane as a helical segment. The Lumenal portion of the chain corresponds to 132 to 138 (ELFAEKK). A helical membrane pass occupies residues 139–159 (WMIMSFYFPYLAIPLWMAIDM). Residues 160-183 (GGRLVKSCHAAKSGPSSTITSKSD) are Cytoplasmic-facing.

Belongs to the TMEM97/sigma-2 receptor family.

The protein localises to the endoplasmic reticulum membrane. Functionally, part of an import route for newly synthesized mitochondrial proteins termed the ER-SURF pathway (ER surface-mediated protein targeting), which retrieves mitochondrial precursor proteins from the ER surface and reroutes them to mitochondria for efficient mitochondrial import. Acts as a quality control factor in the ER, promoting the proteolytic degradation of nonproductive and extramitochondrial precursor proteins in the ER membrane thus removing them from the ER surface. The polypeptide is Efficient mitochondria targeting-associated protein 19 (ema19) (Schizosaccharomyces pombe (strain 972 / ATCC 24843) (Fission yeast)).